A 218-amino-acid polypeptide reads, in one-letter code: Translation initiation factor 6 (218 aa).

This sequence belongs to the eIF-6 family.

Functionally, binds to the 50S ribosomal subunit and prevents its association with the 30S ribosomal subunit to form the 70S initiation complex. In Methanosarcina acetivorans (strain ATCC 35395 / DSM 2834 / JCM 12185 / C2A), this protein is Translation initiation factor 6.